Consider the following 368-residue polypeptide: Agmatine deiminase (368 aa).

The Amidino-cysteine intermediate role is filled by cysteine 357.

Belongs to the agmatine deiminase family. Homodimer.

It catalyses the reaction agmatine + H2O = N-carbamoylputrescine + NH4(+). Its pathway is amine and polyamine biosynthesis; putrescine biosynthesis via agmatine pathway; N-carbamoylputrescine from agmatine: step 1/1. In terms of biological role, mediates the hydrolysis of agmatine into N-carbamoylputrescine in the arginine decarboxylase (ADC) pathway of putrescine biosynthesis, a basic polyamine. The protein is Agmatine deiminase of Pseudomonas putida (strain ATCC 700007 / DSM 6899 / JCM 31910 / BCRC 17059 / LMG 24140 / F1).